The following is a 559-amino-acid chain: Proline--tRNA ligase (559 aa).

Belongs to the class-II aminoacyl-tRNA synthetase family. ProS type 1 subfamily. As to quaternary structure, homodimer.

The protein localises to the cytoplasm. It carries out the reaction tRNA(Pro) + L-proline + ATP = L-prolyl-tRNA(Pro) + AMP + diphosphate. Its function is as follows. Catalyzes the attachment of proline to tRNA(Pro) in a two-step reaction: proline is first activated by ATP to form Pro-AMP and then transferred to the acceptor end of tRNA(Pro). As ProRS can inadvertently accommodate and process non-cognate amino acids such as alanine and cysteine, to avoid such errors it has two additional distinct editing activities against alanine. One activity is designated as 'pretransfer' editing and involves the tRNA(Pro)-independent hydrolysis of activated Ala-AMP. The other activity is designated 'posttransfer' editing and involves deacylation of mischarged Ala-tRNA(Pro). The misacylated Cys-tRNA(Pro) is not edited by ProRS. The sequence is that of Proline--tRNA ligase from Ruthia magnifica subsp. Calyptogena magnifica.